A 350-amino-acid polypeptide reads, in one-letter code: MEVPNVKDFQWKRLAPLPSRRVYCSLLETGGQVYAIGGCDDNGVPMDCFEVYSPEADQWTSLPSLPTARAGVAITALGKRIMVIGGVGTNQLPVKVVEMYNIDEGKWKKRSVLREAAMGISVTAKDYRVYAAGGMGLDLRPHNYLQHYDMLKDMWVSLAPMPTPRYAATSFLRGSKIYVLGGRQSKYAVNAFEVFDIESRSWTKFPNIPCKRAFSSFVTLDNHLYSLGGLRQGRLYRQPKFLRTMDVFDMEQGGWLKMERSFFLKKRRADFVAGGLSGRVIVAGGLGNQPTVLETAEAFHPEKNKWEALPPMPTPRCACSSIVFKNCLLAVGGVSQGLSDAVEALFVSDS.

7 Kelch repeats span residues 1 to 31 (MEVP…ETGG), 32 to 79 (QVYA…ALGK), 81 to 127 (IMVI…AKDY), 128 to 175 (RVYA…LRGS), 176 to 222 (KIYV…TLDN), 224 to 278 (LYSL…GLSG), and 279 to 326 (RVIV…VFKN).

The sequence is that of Kelch domain-containing protein 8A (Klhdc8a) from Mus musculus (Mouse).